The primary structure comprises 287 residues: O-ureido-serine racemase (287 aa).

Substrate is bound at residue asparagine 20. The active-site Proton donor is the cysteine 81. Residues 82–83 (GN), asparagine 167, asparagine 200, and 218–219 (EY) each bind substrate. Cysteine 227 (proton acceptor) is an active-site residue. 228 to 229 (GS) contacts substrate.

It belongs to the diaminopimelate epimerase family. As to quaternary structure, monomer.

The protein resides in the cytoplasm. The enzyme catalyses O-ureido-L-serine = O-ureido-D-serine. Its activity is regulated as follows. Inhibited by thiol-inactivating reagents such as iodoacetamide and Hg(2+) ions. Involved in the biosynthesis of the antibiotic D-cycloserine (DCS), a cyclic structural analog of D-alanine, used as an antitubercular agent. Catalyzes the stereoinversion of O-ureido-L-serine to O-ureido-D-serine. This chain is O-ureido-serine racemase, found in Streptomyces lavendulae.